The primary structure comprises 152 residues: Endoribonuclease YbeY (152 aa).

Zn(2+) contacts are provided by H113, H117, and H123.

It belongs to the endoribonuclease YbeY family. Requires Zn(2+) as cofactor.

Its subcellular location is the cytoplasm. Single strand-specific metallo-endoribonuclease involved in late-stage 70S ribosome quality control and in maturation of the 3' terminus of the 16S rRNA. This is Endoribonuclease YbeY from Delftia acidovorans (strain DSM 14801 / SPH-1).